The primary structure comprises 309 residues: Acetylglutamate kinase (309 aa).

Substrate contacts are provided by residues 69–70 (GG), R91, and N194.

This sequence belongs to the acetylglutamate kinase family. ArgB subfamily.

Its subcellular location is the cytoplasm. The catalysed reaction is N-acetyl-L-glutamate + ATP = N-acetyl-L-glutamyl 5-phosphate + ADP. It functions in the pathway amino-acid biosynthesis; L-arginine biosynthesis; N(2)-acetyl-L-ornithine from L-glutamate: step 2/4. Catalyzes the ATP-dependent phosphorylation of N-acetyl-L-glutamate. This Vesicomyosocius okutanii subsp. Calyptogena okutanii (strain HA) protein is Acetylglutamate kinase.